The sequence spans 434 residues: Putative polysaccharide biosynthesis protein with aminopeptidase-like domain (434 aa).

Aminopeptidase-like stretches follow at residues 1 to 55 (MEEI…IHEV) and 57 to 355 (SGTK…IENN). An insert region spans residues 56 to 164 (KSGTKVFDWT…VVIDSSLEDG (109 aa)). Zn(2+) contacts are provided by H189, D195, and H324. The segment at 356–434 (RTYLNLNPKC…LYRVELLKLV (79 aa)) is permutated winged helix-turn-helix.

It belongs to the UPF0770 family. Homotrimer. The cofactor is Zn(2+).

Its function is as follows. The genomic context suggests a role in the biosynthesis of modified polysaccharides; this association with genes involved in carbohydrate metabolism is observed in several phylogenetically distinct taxa. Is not expected to have peptidase activity despite low similarity to aminopeptidases. This chain is Putative polysaccharide biosynthesis protein with aminopeptidase-like domain, found in Clostridium acetobutylicum (strain ATCC 824 / DSM 792 / JCM 1419 / IAM 19013 / LMG 5710 / NBRC 13948 / NRRL B-527 / VKM B-1787 / 2291 / W).